The chain runs to 2304 residues: Protein Ycf2 (2304 aa).

1637-1644 (GSIGTGRS) is a binding site for ATP.

Belongs to the Ycf2 family.

It localises to the plastid. It is found in the chloroplast stroma. Functionally, probable ATPase of unknown function. Its presence in a non-photosynthetic plant (Epifagus virginiana) and experiments in tobacco indicate that it has an essential function which is probably not related to photosynthesis. This chain is Protein Ycf2, found in Amborella trichopoda.